A 251-amino-acid polypeptide reads, in one-letter code: MTSLVSLENVSVSFGQRRVLSDVSLELKPGKILTLLGPNGAGKSTLVRVVLGLVTPDEGVIKRNGKLRIGYVPQKLYLDTTLPLTVKRFLRLRPGTHKEDILPALKRVQAGHLINAPMQKLSGGETQRVLLARALLNRPQLLVLDEPTQGVDVNGQVALYDLIDQLRRELDCGVLMVSHDLHLVMAKTDEVLCLNHHICCSGTPEVVSLHPEFISMFGPRGAEQLGIYRHHHNHRHDLQGRIVLRRGNDRS.

Residues 5 to 220 (VSLENVSVSF…PEFISMFGPR (216 aa)) form the ABC transporter domain. 37 to 44 (GPNGAGKS) is an ATP binding site.

This sequence belongs to the ABC transporter superfamily. Zinc importer (TC 3.A.1.15.5) family. In terms of assembly, the complex is composed of two ATP-binding proteins (ZnuC), two transmembrane proteins (ZnuB) and a solute-binding protein (ZnuA).

It localises to the cell inner membrane. It catalyses the reaction Zn(2+)(out) + ATP(in) + H2O(in) = Zn(2+)(in) + ADP(in) + phosphate(in) + H(+)(in). Functionally, part of the ABC transporter complex ZnuABC involved in zinc import. Responsible for energy coupling to the transport system. In Shigella dysenteriae serotype 1 (strain Sd197), this protein is Zinc import ATP-binding protein ZnuC.